Consider the following 224-residue polypeptide: PKHD-type hydroxylase tll1907 (224 aa).

Residues 77–176 (KIIGPLLFSR…RLVAVAWVQS (100 aa)) enclose the Fe2OG dioxygenase domain. Fe cation contacts are provided by histidine 96, aspartate 98, and histidine 157. Position 167 (arginine 167) interacts with 2-oxoglutarate.

Fe(2+) serves as cofactor. L-ascorbate is required as a cofactor.

The polypeptide is PKHD-type hydroxylase tll1907 (Thermosynechococcus vestitus (strain NIES-2133 / IAM M-273 / BP-1)).